The sequence spans 64 residues: Large ribosomal subunit protein bL35 (64 aa).

Disordered stretches follow at residues 1–22 and 34–64; these read MPKA…TGKI and EHKP…LLNG. A compositionally biased stretch (basic and acidic residues) spans 34–48; the sequence is EHKPSTRTRRLDGHT. The segment covering 50-64 has biased composition (polar residues); it reads VSANDTQRVNSLLNG.

This sequence belongs to the bacterial ribosomal protein bL35 family.

The polypeptide is Large ribosomal subunit protein bL35 (Mycobacterium leprae (strain Br4923)).